The primary structure comprises 198 residues: Large ribosomal subunit protein bL25 (198 aa).

This sequence belongs to the bacterial ribosomal protein bL25 family. CTC subfamily. As to quaternary structure, part of the 50S ribosomal subunit; part of the 5S rRNA/L5/L18/L25 subcomplex. Contacts the 5S rRNA. Binds to the 5S rRNA independently of L5 and L18.

This is one of the proteins that binds to the 5S RNA in the ribosome where it forms part of the central protuberance. This chain is Large ribosomal subunit protein bL25, found in Gloeothece citriformis (strain PCC 7424) (Cyanothece sp. (strain PCC 7424)).